The chain runs to 406 residues: Phosphorylase b kinase gamma catalytic chain, liver/testis isoform (406 aa).

Positions Tyr24–Phe291 constitute a Protein kinase domain. ATP contacts are provided by residues Ile30–Val38 and Lys53. Residue Asp153 is the Proton acceptor of the active site. Positions Gln306–Pro330 are calmodulin-binding (domain-N). A calmodulin-binding (domain-C) region spans residues Val346–Arg370.

Belongs to the protein kinase superfamily. CAMK Ser/Thr protein kinase family. In terms of assembly, hexadecamer of 4 heterotetramers, each composed of alpha, beta, gamma, and delta subunits. Alpha (PHKA1 or PHKA2) and beta (PHKB) are regulatory subunits, gamma (PHKG1 or PHKG2) is the catalytic subunit, and delta is calmodulin.

The catalysed reaction is 2 ATP + phosphorylase b = 2 ADP + phosphorylase a.. Functionally, catalytic subunit of the phosphorylase b kinase (PHK), which mediates the neural and hormonal regulation of glycogen breakdown (glycogenolysis) by phosphorylating and thereby activating glycogen phosphorylase. May regulate glycogeneolysis in the testis. In vitro, phosphorylates PYGM. The protein is Phosphorylase b kinase gamma catalytic chain, liver/testis isoform (Phkg2) of Mus musculus (Mouse).